The following is a 174-amino-acid chain: UPF0340 protein SAHV_2098 (174 aa).

The protein belongs to the UPF0340 family.

The protein is UPF0340 protein SAHV_2098 of Staphylococcus aureus (strain Mu3 / ATCC 700698).